The chain runs to 527 residues: DUF21 domain-containing protein At1g47330 (527 aa).

At 1–15 (MSSDIPCCGTTFSLY) the chain is on the extracellular side. One can recognise a CNNM transmembrane domain in the interval 8–191 (CGTTFSLYVV…GKGGDLTTDE (184 aa)). The helical transmembrane segment at 16-36 (VVIIIALVAFAGLMAGLTLGL) threads the bilayer. At 37 to 70 (MSLGLVDLEVLIKSGRPQDRINAGKIFPVVKNQH) the chain is on the cytoplasmic side. A helical membrane pass occupies residues 71 to 91 (LLLCTLLIGNSMAMEALPIFL). Residues 92 to 93 (DK) are Extracellular-facing. A helical transmembrane segment spans residues 94 to 114 (IVPPWLAILLSVTLILVFGEI). Residues 115–126 (MPQAVCTRYGLK) lie on the Cytoplasmic side of the membrane. The helical transmembrane segment at 127–147 (VGAIMAPFVRVLLVLFFPISY) threads the bilayer. Over 148 to 527 (PISKVLDWML…PKHEESTQTL (380 aa)) the chain is Extracellular. 3 consecutive CBS domains span residues 210-271 (MTPI…EVPL), 274-334 (MSMR…TKDE), and 366-435 (KSEN…ILDE). Disordered regions lie at residues 307-335 (KDLDEQEQSPETSENGIERRKNKKTKDEL), 358-384 (ETGDAKSGKSENGEEQQGSGKTSLLAA), and 464-527 (ITQS…TQTL). Ser-315 bears the Phosphoserine mark. Basic and acidic residues predominate over residues 358 to 369 (ETGDAKSGKSEN). Low complexity predominate over residues 464–501 (ITQSSSGSTSPNQTSHMATPDSSPTTKPSNSSPTRKPS). Asn-475 carries N-linked (GlcNAc...) asparagine glycosylation. The span at 502–515 (VSSPTREPSDSSHS) shows a compositional bias: polar residues. Over residues 518 to 527 (PKHEESTQTL) the composition is skewed to basic and acidic residues.

The protein resides in the membrane. This Arabidopsis thaliana (Mouse-ear cress) protein is DUF21 domain-containing protein At1g47330 (CBSDUF7).